The chain runs to 413 residues: Probable inactive allantoicase (413 aa).

The protein belongs to the allantoicase family.

Functionally, the function of this enzyme is unclear as allantoicase activity is not known to exist in mammals. This chain is Probable inactive allantoicase, found in Rattus norvegicus (Rat).